The primary structure comprises 950 residues: Leucine--tRNA ligase 2 (950 aa).

A 'HIGH' region motif is present at residues 47 to 57 (PYPNSPFHLGH). The 'KMSKS' region signature appears at 631–635 (KMSKS). Lysine 634 contacts ATP.

This sequence belongs to the class-I aminoacyl-tRNA synthetase family.

It is found in the cytoplasm. The enzyme catalyses tRNA(Leu) + L-leucine + ATP = L-leucyl-tRNA(Leu) + AMP + diphosphate. The protein is Leucine--tRNA ligase 2 of Metallosphaera sedula (strain ATCC 51363 / DSM 5348 / JCM 9185 / NBRC 15509 / TH2).